A 969-amino-acid chain; its full sequence is RNA polymerase-associated protein RapA (969 aa).

One can recognise a Helicase ATP-binding domain in the interval 164–334 (EVGRRHAPRV…FARLRLLDSD (171 aa)). Position 177–184 (177–184 (DEVGLGKT)) interacts with ATP. A DEAH box motif is present at residues 280-283 (DEAH). One can recognise a Helicase C-terminal domain in the interval 492-668 (RVNWLLEKLK…GSNEALNDVI (177 aa)).

The protein belongs to the SNF2/RAD54 helicase family. RapA subfamily. Interacts with the RNAP. Has a higher affinity for the core RNAP than for the holoenzyme. Its ATPase activity is stimulated by binding to RNAP.

In terms of biological role, transcription regulator that activates transcription by stimulating RNA polymerase (RNAP) recycling in case of stress conditions such as supercoiled DNA or high salt concentrations. Probably acts by releasing the RNAP, when it is trapped or immobilized on tightly supercoiled DNA. Does not activate transcription on linear DNA. Probably not involved in DNA repair. This chain is RNA polymerase-associated protein RapA, found in Vibrio vulnificus (strain YJ016).